The following is a 564-amino-acid chain: Septin-9 (564 aa).

At Met1 the chain carries N-acetylmethionine. The residue at position 12 (Ser12) is a Phosphoserine. Thr24 and Thr31 each carry phosphothreonine. Disordered stretches follow at residues 38-165 (VASS…PVTD) and 178-224 (PAEA…DSEV). Position 44 is an N6-acetyllysine (Lys44). Ser64, Ser67, and Ser71 each carry phosphoserine. Over residues 95–109 (DISSKQVESTASTPG) the composition is skewed to polar residues. Residues 116–134 (KRAEVLGHKTPEPVPRRTE) are compositionally biased toward basic and acidic residues. Phosphothreonine is present on Thr125. The span at 190 to 203 (TLENSEAPMSQLQS) shows a compositional bias: polar residues. Tyr258 is modified (phosphotyrosine). In terms of domain architecture, Septin-type G spans 275–546 (QGFEFNIMVV…EAYRVKRLNE (272 aa)). The segment at 285 to 292 (GQSGLGKS) is G1 motif. 285–292 (GQSGLGKS) is a binding site for GTP. A phosphoserine mark is found at Ser307 and Ser312. Residues Thr319, Gly345, 425–433 (KADTLTLEE), Gly480, and Arg495 each bind GTP. The interval 342–345 (DTPG) is G3 motif. The G4 motif stretch occupies residues 424 to 427 (AKAD).

The protein belongs to the TRAFAC class TrmE-Era-EngA-EngB-Septin-like GTPase superfamily. Septin GTPase family. In terms of assembly, septins polymerize into heterooligomeric protein complexes that form filaments, and associate with cellular membranes, actin filaments, and microtubules. GTPase activity is required for filament formation. Interacts with SEPTIN2, SEPTIN6, SEPTIN7, SEPTIN11 and SEPTIN14. Interacts with RTKN and ARHGEF18. In terms of tissue distribution, expressed in the brain, mainly in the perikarya and processes of astrocytes in the cerebellum, dentate gyrus and corpus callosum (at protein level). In the sciatic nerve, highly expressed in Schwann cells (at protein level). Isoforms are differentially expressed in testes, kidney, liver, heart, spleen and brain. Undetectable in skeletal muscle.

The protein localises to the cytoplasm. The protein resides in the cytoskeleton. Filament-forming cytoskeletal GTPase. May play a role in cytokinesis (Potential). The sequence is that of Septin-9 from Rattus norvegicus (Rat).